A 478-amino-acid polypeptide reads, in one-letter code: Bifunctional protein HldE (478 aa).

Residues 1-318 (MKVTLPDFRQ…ENAIRGRADT (318 aa)) form a ribokinase region. 195–198 (NLSE) is an ATP binding site. D264 is a catalytic residue. The cytidylyltransferase stretch occupies residues 344-478 (MTNGCFDILH…NMIKASTSQS (135 aa)).

In the N-terminal section; belongs to the carbohydrate kinase PfkB family. It in the C-terminal section; belongs to the cytidylyltransferase family. In terms of assembly, homodimer.

It catalyses the reaction D-glycero-beta-D-manno-heptose 7-phosphate + ATP = D-glycero-beta-D-manno-heptose 1,7-bisphosphate + ADP + H(+). It carries out the reaction D-glycero-beta-D-manno-heptose 1-phosphate + ATP + H(+) = ADP-D-glycero-beta-D-manno-heptose + diphosphate. It functions in the pathway nucleotide-sugar biosynthesis; ADP-L-glycero-beta-D-manno-heptose biosynthesis; ADP-L-glycero-beta-D-manno-heptose from D-glycero-beta-D-manno-heptose 7-phosphate: step 1/4. The protein operates within nucleotide-sugar biosynthesis; ADP-L-glycero-beta-D-manno-heptose biosynthesis; ADP-L-glycero-beta-D-manno-heptose from D-glycero-beta-D-manno-heptose 7-phosphate: step 3/4. Functionally, catalyzes the phosphorylation of D-glycero-D-manno-heptose 7-phosphate at the C-1 position to selectively form D-glycero-beta-D-manno-heptose-1,7-bisphosphate. Catalyzes the ADP transfer from ATP to D-glycero-beta-D-manno-heptose 1-phosphate, yielding ADP-D-glycero-beta-D-manno-heptose. The protein is Bifunctional protein HldE of Pectobacterium atrosepticum (strain SCRI 1043 / ATCC BAA-672) (Erwinia carotovora subsp. atroseptica).